The primary structure comprises 168 residues: MRWSGRAHVFGDDVDTDQIIPGRCLRRVSYDELGRYAMTGADPEFPEKVREGDVIVAGKNFGCGSSREQAVMALQQAGVACVVARSFARIFYRNAINRGLPTVEAEEDPTEVVEDGNRVTVDLDELVLRAGSEEVPLREPPEFALQAWREGGLLELVKKNPDKPPWRD.

The protein belongs to the LeuD family. LeuD type 2 subfamily. In terms of assembly, heterodimer of LeuC and LeuD.

The catalysed reaction is (2R,3S)-3-isopropylmalate = (2S)-2-isopropylmalate. It participates in amino-acid biosynthesis; L-leucine biosynthesis; L-leucine from 3-methyl-2-oxobutanoate: step 2/4. Catalyzes the isomerization between 2-isopropylmalate and 3-isopropylmalate, via the formation of 2-isopropylmaleate. The protein is 3-isopropylmalate dehydratase small subunit 2 (leuD2) of Methanopyrus kandleri (strain AV19 / DSM 6324 / JCM 9639 / NBRC 100938).